A 283-amino-acid polypeptide reads, in one-letter code: MGKILDGKFVANLLGEKLKEKVKDLKEEGITPHFCVINIGDDPASKIYVRTKKRRAEKMGIIQDIYQLPADTKQEVALNLIDKLNEDPDINGVMVQLPAPEQIDADELLERIDPNKDVDGLTPSNIGRIWMENHFIEPATAEGIIALLKYYKILLKGKNVVVIGRSNIVGKPVAALMLEQNATVTIAHSETENLAELTRNADIIVSATGQAFLVTEDMVKDGVVVVDVGMNHVNGKLVGDVDFENVKKKASYITPVPGGVGPLTVQFLMEAVVKLTRRQNGRE.

NADP(+) contacts are provided by residues 164–166 and Ser-189; that span reads GRS.

It belongs to the tetrahydrofolate dehydrogenase/cyclohydrolase family. In terms of assembly, homodimer.

It carries out the reaction (6R)-5,10-methylene-5,6,7,8-tetrahydrofolate + NADP(+) = (6R)-5,10-methenyltetrahydrofolate + NADPH. The catalysed reaction is (6R)-5,10-methenyltetrahydrofolate + H2O = (6R)-10-formyltetrahydrofolate + H(+). Its pathway is one-carbon metabolism; tetrahydrofolate interconversion. Catalyzes the oxidation of 5,10-methylenetetrahydrofolate to 5,10-methenyltetrahydrofolate and then the hydrolysis of 5,10-methenyltetrahydrofolate to 10-formyltetrahydrofolate. The sequence is that of Bifunctional protein FolD from Lactobacillus acidophilus (strain ATCC 700396 / NCK56 / N2 / NCFM).